Here is a 234-residue protein sequence, read N- to C-terminus: BTB/POZ domain-containing protein KCTD5 (234 aa).

Residue Ala2 is modified to N-acetylalanine. The region spanning 44 to 146 (KWVRLNVGGT…LVKDKIRERD (103 aa)) is the BTB domain. The interval 213 to 234 (PYGTTSEPSEKAKILQERGSRM) is disordered. Residues 220 to 234 (PSEKAKILQERGSRM) are compositionally biased toward basic and acidic residues.

In terms of assembly, homopentamer. Interacts (via C-terminus) with GRASP55/GORASP2. Interacts with CUL3 and with ubiquitinated proteins. Interacts with CRY1.

Its subcellular location is the cytoplasm. The protein localises to the cytosol. It is found in the nucleus. Its interaction with CUL3 suggests that it may act as a substrate adapter in some E3 ligase complex. Does not affect the function of Kv channel Kv2.1/KCNB1, Kv1.2/KCNA2, Kv4.2/KCND2 and Kv3.4/KCNC4. This Rattus norvegicus (Rat) protein is BTB/POZ domain-containing protein KCTD5 (Kctd5).